The following is a 531-amino-acid chain: Large neutral amino acids transporter small subunit 2 (531 aa).

Residues 1–29 (MEKGARQRNNTAKNHPGSDTSPEAEASSG) form a disordered region. Topologically, residues 1–43 (MEKGARQRNNTAKNHPGSDTSPEAEASSGGGGVALKKEIGLVS) are cytoplasmic. The segment covering 7–21 (QRNNTAKNHPGSDTS) has biased composition (polar residues). A phosphoserine mark is found at serine 18, serine 21, serine 27, and serine 28. The chain crosses the membrane as a helical span at residues 44 to 64 (ACGIIVGNIIGSGIFVSPKGV). Isoleucine 52 contacts L-leucine. The Extracellular portion of the chain corresponds to 65–72 (LENAGSVG). Residues 73 to 94 (LALIVWIVTGIITAVGALCYAE) form a helical membrane-spanning segment. At 95 to 115 (LGVTIPKSGGDYSYVKDIFGG) the chain is on the cytoplasmic side. The helical transmembrane segment at 116–148 (LAGFLRLWIAVLVIYPTNQAVIALTFSNYVLQP) threads the bilayer. L-tryptophan is bound at residue asparagine 133. At 149-156 (LFPTCFPP) the chain is on the extracellular side. A helical membrane pass occupies residues 157-177 (ESGLRLLAAICLLLLTWVNCS). At 178–180 (SVR) the chain is on the cytoplasmic side. The chain crosses the membrane as a helical span at residues 181-209 (WATRVQDIFTAGKLLALALIIIMGIVQIC). Topologically, residues 210-229 (KGEFFWLEPKNAFENFQEPD) are extracellular. Residues 230 to 251 (IGLVALAFLQGSFAYGGWNFLN) form a helical membrane-spanning segment. Residue glycine 245 coordinates L-leucine. Residues 252–264 (YVTEELVDPYKNL) are Cytoplasmic-facing. A helical transmembrane segment spans residues 265–286 (PRAIFISIPLVTFVYVFANIAY). Over 287–311 (VTAMSPQELLASNAVAVTFGEKLLG) the chain is Extracellular. A helical membrane pass occupies residues 312-337 (VMAWIMPISVALSTFGGVNGSLFTSS). The Cytoplasmic portion of the chain corresponds to 338–363 (RLFFAGAREGHLPSVLAMIHVKRCTP). Residues 364–381 (IPALLFTCLSTLLMLVTS) form a helical membrane-spanning segment. At 382 to 385 (DMYT) the chain is on the extracellular side. Residues 386-407 (LINYVGFINYLFYGVTVAGQIV) traverse the membrane as a helical segment. Position 394 (asparagine 394) interacts with L-tryptophan. Topologically, residues 408 to 422 (LRWKKPDIPRPIKVS) are cytoplasmic. Helical transmembrane passes span 423 to 445 (LLFP…WSEP) and 446 to 465 (VVCG…YFLG). Residues 466–531 (VYWQHKPKCF…VKDPDSEEQP (66 aa)) lie on the Cytoplasmic side of the membrane. Positions 499-531 (NSGAEETTDDLEEQHKPIFKPTPVKDPDSEEQP) are disordered. The residue at position 527 (serine 527) is a Phosphoserine.

It belongs to the amino acid-polyamine-organocation (APC) superfamily. L-type amino acid transporter (LAT) (TC 2.A.3.8) family. Disulfide-linked heterodimer composed of the catalytic light chain subunit SLC7A8 and the heavy chain subunit SLC3A2. SLC3A2 acts as a chaperone for correct plasma membrane trafficking and stabilization of SLC7A8 and modulates the substrate affinity and specificity of SLC7A8. ICAM-1 associates with the heterodimer SLC3A2/SLC7A8; facilitates leucine uptake. In terms of tissue distribution, strongly expressed in kidney and small intestine. Moderately present in placenta, ovary and brain. Expressed in the inner ear.

Its subcellular location is the cell membrane. The protein localises to the basolateral cell membrane. It carries out the reaction L-histidine(in) + L-phenylalanine(out) = L-histidine(out) + L-phenylalanine(in). The catalysed reaction is L-tryptophan(in) + L-phenylalanine(out) = L-tryptophan(out) + L-phenylalanine(in). The enzyme catalyses L-isoleucine(in) + L-phenylalanine(out) = L-isoleucine(out) + L-phenylalanine(in). It catalyses the reaction L-valine(in) + L-phenylalanine(out) = L-valine(out) + L-phenylalanine(in). It carries out the reaction L-leucine(in) + L-phenylalanine(out) = L-leucine(out) + L-phenylalanine(in). The catalysed reaction is L-glutamine(in) + L-phenylalanine(out) = L-glutamine(out) + L-phenylalanine(in). The enzyme catalyses L-cysteine(in) + L-phenylalanine(out) = L-cysteine(out) + L-phenylalanine(in). It catalyses the reaction L-phenylalanine(out) + L-methionine(in) = L-phenylalanine(in) + L-methionine(out). It carries out the reaction L-leucine(out) + L-methionine(in) = L-leucine(in) + L-methionine(out). The catalysed reaction is L-cysteine(out) + L-methionine(in) = L-cysteine(in) + L-methionine(out). The enzyme catalyses S-methylmercury-L-cysteine(out) + L-methionine(in) = S-methylmercury-L-cysteine(in) + L-methionine(out). It catalyses the reaction S-methylmercury-L-cysteine(in) + L-leucine(out) = S-methylmercury-L-cysteine(out) + L-leucine(in). It carries out the reaction S-methylmercury-L-cysteine(in) + L-phenylalanine(out) = S-methylmercury-L-cysteine(out) + L-phenylalanine(in). The catalysed reaction is L-phenylalanine(out) + L-serine(in) = L-phenylalanine(in) + L-serine(out). The enzyme catalyses L-phenylalanine(out) + glycine(in) = L-phenylalanine(in) + glycine(out). It catalyses the reaction L-phenylalanine(out) + L-alanine(in) = L-phenylalanine(in) + L-alanine(out). It carries out the reaction L-tryptophan(in) = L-tryptophan(out). The catalysed reaction is 3,3',5-triiodo-L-thyronine(out) = 3,3',5-triiodo-L-thyronine(in). The enzyme catalyses 3,3'-diiodo-L-thyronine(out) = 3,3'-diiodo-L-thyronine(in). It catalyses the reaction L-dopa(out) + L-phenylalanine(in) = L-dopa(in) + L-phenylalanine(out). In terms of biological role, associates with SLC3A2 to form a functional heterodimeric complex that translocates small and large neutral amino acids with broad specificity and a stoichiometry of 1:1. Functions as amino acid antiporter mediating the influx of extracellular essential amino acids mainly in exchange with the efflux of highly concentrated intracellular amino acids. Has relatively symmetrical selectivities but strongly asymmetrical substrate affinities at both the intracellular and extracellular sides of the transporter. This asymmetry allows SLC7A8 to regulate intracellular amino acid pools (mM concentrations) by exchange with external amino acids (uM concentration range), equilibrating the relative concentrations of different amino acids across the plasma membrane instead of mediating their net uptake. May play an essential role in the reabsorption of neutral amino acids from the epithelial cells to the bloodstream in the kidney. Involved in the uptake of methylmercury (MeHg) when administered as the L-cysteine or D,L-homocysteine complexes, and hence plays a role in metal ion homeostasis and toxicity. Involved in the cellular activity of small molecular weight nitrosothiols, via the stereoselective transport of L-nitrosocysteine (L-CNSO) across the transmembrane. Imports the thyroid hormone diiodothyronine (T2) and to a smaller extent triiodothyronine (T3) but not rT 3 or thyroxine (T4). Mediates the uptake of L-DOPA. May participate in auditory function. The protein is Large neutral amino acids transporter small subunit 2 (Slc7a8) of Mus musculus (Mouse).